Here is a 423-residue protein sequence, read N- to C-terminus: Immunity-related GTPase family M protein 3 (423 aa).

The IRG-type G domain maps to 83 to 260 (YRVKIAVTGD…PELRNTLQKD (178 aa)). Residues 92–99 (DSGNGMSS), 117–121 (TGVVR), and 200–202 (KLD) each bind GTP.

It belongs to the TRAFAC class dynamin-like GTPase superfamily. IRG family.

The protein localises to the endoplasmic reticulum. The protein resides in the cytoplasmic vesicle membrane. Its subcellular location is the lipid droplet. It catalyses the reaction GTP + H2O = GDP + phosphate + H(+). Its function is as follows. Immunity-related GTPase that plays important roles in host resistance to acute infection by protozoan, such as Toxoplasma gondii and Leishmania major. Acts as a dynamin-like protein that binds to intracellular membranes and promotes remodeling and trafficking of those membranes. Acts predominantly to restrict acute protozoan infection: expression is required in both hematopoietic and non-hematopoietic cellular compartments and is dependent on Stat1. Only plays a partial role in the control of latent Toxoplasma infection. Involved in the clearance of acute protozoan infections by regulating autophagy, possibly by promoting the fusion of phagosomes with lysosomes for efficient degradation of vacuoles containing parasites. Probably involved in membrane disruption of parasite-containing vacuoles. In addition to its role in resistance to acute infection by protozoan, also acts as a negative regulator of the integrated stress response (ISR) following coxsackievirus B3 infection. Promotes differentiation of activated CD8(+) T-cells. This chain is Immunity-related GTPase family M protein 3, found in Mus musculus (Mouse).